The sequence spans 219 residues: uncharacterized protein (219 aa).

Positions 4 to 79 (GLRIIAENKI…YIIEIEEEES (76 aa)) constitute an ACT domain.

This is an uncharacterized protein from Archaeoglobus fulgidus (strain ATCC 49558 / DSM 4304 / JCM 9628 / NBRC 100126 / VC-16).